A 491-amino-acid polypeptide reads, in one-letter code: Delayed-rectifier potassium channel regulatory subunit KCNS3 (491 aa).

The Cytoplasmic segment spans residues 1–182 (MVFGEFFHRP…IRMENPAYCL (182 aa)). Residues 183 to 204 (SAKLIAISSLSVVLASIVAMCV) form a helical membrane-spanning segment. Residues 205–220 (HSMSEFQNEDGEVDDP) are Extracellular-facing. A helical membrane pass occupies residues 221–243 (VLEGVEIACIAWFTGELAIRLVA). At 244-254 (APSQKKFWKNP) the chain is on the cytoplasmic side. Residues 255–275 (LNIIDFVSIIPFYATLAVDTK) form a helical membrane-spanning segment. Topologically, residues 276–285 (EEESEDIENM) are extracellular. Residues 286-306 (GKVVQILRLMRIFRILKLARH) traverse the membrane as a helical; Voltage-sensor segment. At 307 to 321 (SVGLRSLGATLRHSY) the chain is on the cytoplasmic side. Residues 322-343 (HEVGLLLLFLSVGISIFSVLIY) form a helical membrane-spanning segment. At 344–357 (SVEKDEHKSSLTSI) the chain is on the extracellular side. Positions 358–369 (PICWWWATISMT) form an intramembrane region, helical. Residues 370–375 (TVGYGD) carry the Selectivity filter motif. Residues 370–377 (TVGYGDTH) lie within the membrane without spanning it. Residues 378-384 (PVTLAGK) are Extracellular-facing. The chain crosses the membrane as a helical span at residues 385 to 413 (IIASTCIICGILVVALPITIIFNKFSKYY). The Cytoplasmic segment spans residues 414 to 491 (QKQKDMEVDQ…TASLENCTGK (78 aa)).

Belongs to the potassium channel family. S (TC 1.A.1.2) subfamily. Kv9.3/KCNS3 sub-subfamily. Heterotetramer with KCNB1. Does not form homomultimers.

The protein localises to the cell membrane. Potassium channel regulatory subunit that modulates the delayed rectifier potassium channel activity of KCNB1 by namely slowing down the deactivation and inactivation time constants. While it does not form functional channel on its own, it can form functional heterotetrameric channels with KCNB1. The sequence is that of Delayed-rectifier potassium channel regulatory subunit KCNS3 from Mus musculus (Mouse).